The primary structure comprises 525 residues: Delta(24)-sterol reductase homolog dhcr-24 (525 aa).

Transmembrane regions (helical) follow at residues 27 to 47 (WVFV…VFDF) and 214 to 234 (SLFF…AATI). The region spanning 47–239 (FRNRIVHAVN…VAATIKIIPC (193 aa)) is the FAD-binding PCMH-type domain.

Belongs to the FAD-binding oxidoreductase/transferase type 4 family. FAD is required as a cofactor.

The protein resides in the endoplasmic reticulum membrane. Its subcellular location is the golgi apparatus membrane. It carries out the reaction cholesterol + NADP(+) = desmosterol + NADPH + H(+). The enzyme catalyses lanosterol + NADPH + H(+) = 24,25-dihydrolanosterol + NADP(+). The catalysed reaction is 5alpha-cholest-8-en-3beta-ol + NADP(+) = zymosterol + NADPH + H(+). The protein operates within steroid biosynthesis; cholesterol biosynthesis. Catalyzes the reduction of the delta-24 double bond of sterol intermediates during cholesterol biosynthesis. The polypeptide is Delta(24)-sterol reductase homolog dhcr-24 (Caenorhabditis elegans).